Here is a 345-residue protein sequence, read N- to C-terminus: Phosphate acyltransferase (345 aa).

The protein belongs to the PlsX family. In terms of assembly, homodimer. Probably interacts with PlsY.

It is found in the cytoplasm. It catalyses the reaction a fatty acyl-[ACP] + phosphate = an acyl phosphate + holo-[ACP]. The protein operates within lipid metabolism; phospholipid metabolism. Its function is as follows. Catalyzes the reversible formation of acyl-phosphate (acyl-PO(4)) from acyl-[acyl-carrier-protein] (acyl-ACP). This enzyme utilizes acyl-ACP as fatty acyl donor, but not acyl-CoA. This is Phosphate acyltransferase from Wolbachia sp. subsp. Brugia malayi (strain TRS).